We begin with the raw amino-acid sequence, 89 residues long: Small ribosomal subunit protein uS15 (89 aa).

This sequence belongs to the universal ribosomal protein uS15 family. Part of the 30S ribosomal subunit. Forms a bridge to the 50S subunit in the 70S ribosome, contacting the 23S rRNA.

Its function is as follows. One of the primary rRNA binding proteins, it binds directly to 16S rRNA where it helps nucleate assembly of the platform of the 30S subunit by binding and bridging several RNA helices of the 16S rRNA. Forms an intersubunit bridge (bridge B4) with the 23S rRNA of the 50S subunit in the ribosome. The protein is Small ribosomal subunit protein uS15 of Pseudarthrobacter chlorophenolicus (strain ATCC 700700 / DSM 12829 / CIP 107037 / JCM 12360 / KCTC 9906 / NCIMB 13794 / A6) (Arthrobacter chlorophenolicus).